A 451-amino-acid chain; its full sequence is Phosphoglucosamine mutase (451 aa).

The active-site Phosphoserine intermediate is S107. Mg(2+)-binding residues include S107, D246, D248, and D250. Position 107 is a phosphoserine (S107).

This sequence belongs to the phosphohexose mutase family. Mg(2+) serves as cofactor. In terms of processing, activated by phosphorylation.

The enzyme catalyses alpha-D-glucosamine 1-phosphate = D-glucosamine 6-phosphate. In terms of biological role, catalyzes the conversion of glucosamine-6-phosphate to glucosamine-1-phosphate. This chain is Phosphoglucosamine mutase, found in Burkholderia vietnamiensis (strain G4 / LMG 22486) (Burkholderia cepacia (strain R1808)).